A 380-amino-acid chain; its full sequence is tRNA-specific 2-thiouridylase MnmA (380 aa).

ATP-binding positions include 26–33 and L52; that span reads AMSGGVDS. C120 functions as the Nucleophile in the catalytic mechanism. Cysteines 120 and 217 form a disulfide. Position 144 (G144) interacts with ATP. An interaction with tRNA region spans residues 166–168; it reads RDQ. Catalysis depends on C217, which acts as the Cysteine persulfide intermediate.

The protein belongs to the MnmA/TRMU family.

Its subcellular location is the cytoplasm. It carries out the reaction S-sulfanyl-L-cysteinyl-[protein] + uridine(34) in tRNA + AH2 + ATP = 2-thiouridine(34) in tRNA + L-cysteinyl-[protein] + A + AMP + diphosphate + H(+). Its function is as follows. Catalyzes the 2-thiolation of uridine at the wobble position (U34) of tRNA, leading to the formation of s(2)U34. This is tRNA-specific 2-thiouridylase MnmA from Jannaschia sp. (strain CCS1).